We begin with the raw amino-acid sequence, 62 residues long: Large ribosomal subunit protein bL28 (62 aa).

Belongs to the bacterial ribosomal protein bL28 family.

This is Large ribosomal subunit protein bL28 from Acidothermus cellulolyticus (strain ATCC 43068 / DSM 8971 / 11B).